The primary structure comprises 502 residues: MDLIPNLAVETWLLLAVSLVLLYLYGTRTHGLFKRLGIPGPTPLPLLGNVLSYRQGLWKFDTECYKKYGKMWGTYEGQLPVLAITDPDVIRTVLVKECYSVFTNRRSLGPVGFMKSAISLAEDEEWKRIRSLLSPTFTSGKLKEMFPIIAQYGDVLVRNLRREAEKGKPVTLKDIFGAYSMDVITGTSFGVNIDSLNNPQDPFVESTKKFLKFGFLDPLFLSIILFPFLTPVFEALNVSLFPKDTINFLSKSVNRMKKSRLNDKQKHRLDFLQLMIDSQNSKETESHKALSDLELAAQSIIFIFAGYETTSSVLSFTLYELATHPDVQQKLQKEIDAVLPNKAPPTYDAVVQMEYLDMVVNETLRLFPVAIRLERTCKKDVEINGVFIPKGSMVVIPTYALHHDPKYWTEPEEFRPERFSKKKDSIDPYIYTPFGTGPRNCIGMRFALMNMKLALIRVLQNFSFKPCKETQIPLKLDTQGLLQPEKPIVLKVDSRDGTLSGE.

Cysteine 441 contacts heme.

Belongs to the cytochrome P450 family. It depends on heme as a cofactor.

Its subcellular location is the endoplasmic reticulum membrane. It is found in the microsome membrane. It carries out the reaction an organic molecule + reduced [NADPH--hemoprotein reductase] + O2 = an alcohol + oxidized [NADPH--hemoprotein reductase] + H2O + H(+). The catalysed reaction is 17beta-estradiol + reduced [NADPH--hemoprotein reductase] + O2 = 2-hydroxy-17beta-estradiol + oxidized [NADPH--hemoprotein reductase] + H2O + H(+). It catalyses the reaction 17beta-estradiol + reduced [NADPH--hemoprotein reductase] + O2 = 4-hydroxy-17beta-estradiol + oxidized [NADPH--hemoprotein reductase] + H2O + H(+). The enzyme catalyses estrone + reduced [NADPH--hemoprotein reductase] + O2 = 2-hydroxyestrone + oxidized [NADPH--hemoprotein reductase] + H2O + H(+). It carries out the reaction estrone + reduced [NADPH--hemoprotein reductase] + O2 = 4-hydroxyestrone + oxidized [NADPH--hemoprotein reductase] + H2O + H(+). The catalysed reaction is testosterone + reduced [NADPH--hemoprotein reductase] + O2 = 6beta,17beta-dihydroxyandrost-4-en-3-one + oxidized [NADPH--hemoprotein reductase] + H2O + H(+). It catalyses the reaction androst-4-ene-3,17-dione + reduced [NADPH--hemoprotein reductase] + O2 = 6beta-hydroxyandrost-4-ene-3,17-dione + oxidized [NADPH--hemoprotein reductase] + H2O + H(+). The enzyme catalyses progesterone + reduced [NADPH--hemoprotein reductase] + O2 = 6beta-hydroxyprogesterone + oxidized [NADPH--hemoprotein reductase] + H2O + H(+). It carries out the reaction all-trans-retinol + reduced [NADPH--hemoprotein reductase] + O2 = all-trans-retinal + oxidized [NADPH--hemoprotein reductase] + 2 H2O + H(+). The catalysed reaction is all-trans-retinoate + reduced [NADPH--hemoprotein reductase] + O2 = all-trans-4-hydroxyretinoate + oxidized [NADPH--hemoprotein reductase] + H2O + H(+). It participates in steroid hormone biosynthesis. It functions in the pathway cofactor metabolism; retinol metabolism. Functionally, a cytochrome P450 monooxygenase involved in the metabolism of steroid hormones and vitamins. Mechanistically, uses molecular oxygen inserting one oxygen atom into a substrate, and reducing the second into a water molecule, with two electrons provided by NADPH via cytochrome P450 reductase (NADPH--hemoprotein reductase). Catalyzes the hydroxylation of carbon-hydrogen bonds. Exhibits high catalytic activity for the formation of catechol estrogens from 17beta-estradiol (E2) and estrone (E1), namely 2-hydroxy E1 and E2. Catalyzes 6beta-hydroxylation of the steroid hormones testosterone, progesterone, and androstenedione. Catalyzes the oxidative conversion of all-trans-retinol to all-trans-retinal, a rate-limiting step for the biosynthesis of all-trans-retinoic acid (atRA). Further metabolizes all trans-retinoic acid (atRA) to 4-hydroxyretinoate and may play a role in hepatic atRA clearance. Also involved in the oxidative metabolism of xenobiotics, including calcium channel blocking drug nifedipine and immunosuppressive drug cyclosporine. In Homo sapiens (Human), this protein is Cytochrome P450 3A5.